Consider the following 52-residue polypeptide: UPF0391 membrane protein XCV0245 (52 aa).

The next 2 membrane-spanning stretches (helical) occupy residues Ala5–Gly25 and Ala27–Phe47.

The protein belongs to the UPF0391 family.

The protein resides in the cell membrane. In Xanthomonas euvesicatoria pv. vesicatoria (strain 85-10) (Xanthomonas campestris pv. vesicatoria), this protein is UPF0391 membrane protein XCV0245.